A 198-amino-acid chain; its full sequence is Probable nicotinate-nucleotide adenylyltransferase (198 aa).

Belongs to the NadD family.

It catalyses the reaction nicotinate beta-D-ribonucleotide + ATP + H(+) = deamido-NAD(+) + diphosphate. It functions in the pathway cofactor biosynthesis; NAD(+) biosynthesis; deamido-NAD(+) from nicotinate D-ribonucleotide: step 1/1. In terms of biological role, catalyzes the reversible adenylation of nicotinate mononucleotide (NaMN) to nicotinic acid adenine dinucleotide (NaAD). This Albidiferax ferrireducens (strain ATCC BAA-621 / DSM 15236 / T118) (Rhodoferax ferrireducens) protein is Probable nicotinate-nucleotide adenylyltransferase.